An 83-amino-acid polypeptide reads, in one-letter code: Cytochrome c oxidase subunit 7A2, mitochondrial (83 aa).

The N-terminal 23 residues, 1–23, are a transit peptide targeting the mitochondrion; the sequence is MLRNLLALRQIGQRTISTASRRH. Over 24-48 the chain is Mitochondrial matrix; sequence FKNKVPEKQKLFQEDDEIPLYLKGG. At Lys33 the chain carries N6-acetyllysine. A helical membrane pass occupies residues 49–77; that stretch reads VADALLYRATMILTVGGTAYAIYELAVAS. Residues 78–83 are Mitochondrial intermembrane-facing; it reads FPKKQE.

The protein belongs to the cytochrome c oxidase VIIa family. In terms of assembly, component of the cytochrome c oxidase (complex IV, CIV), a multisubunit enzyme composed of 14 subunits. The complex is composed of a catalytic core of 3 subunits MT-CO1, MT-CO2 and MT-CO3, encoded in the mitochondrial DNA, and 11 supernumerary subunits COX4I1 (or COX4I2), COX5A, COX5B, COX6A1 (or COX6A2), COX6B1 (or COX6B2), COX6C, COX7A2 (or COX7A1), COX7B, COX7C, COX8A and NDUFA4, which are encoded in the nuclear genome. The complex exists as a monomer or a dimer and forms supercomplexes (SCs) in the inner mitochondrial membrane with NADH-ubiquinone oxidoreductase (complex I, CI) and ubiquinol-cytochrome c oxidoreductase (cytochrome b-c1 complex, complex III, CIII), resulting in different assemblies (supercomplex SCI(1)III(2)IV(1) and megacomplex MCI(2)III(2)IV(2)). Interacts with PET100.

It localises to the mitochondrion inner membrane. The protein operates within energy metabolism; oxidative phosphorylation. Its function is as follows. Component of the cytochrome c oxidase, the last enzyme in the mitochondrial electron transport chain which drives oxidative phosphorylation. The respiratory chain contains 3 multisubunit complexes succinate dehydrogenase (complex II, CII), ubiquinol-cytochrome c oxidoreductase (cytochrome b-c1 complex, complex III, CIII) and cytochrome c oxidase (complex IV, CIV), that cooperate to transfer electrons derived from NADH and succinate to molecular oxygen, creating an electrochemical gradient over the inner membrane that drives transmembrane transport and the ATP synthase. Cytochrome c oxidase is the component of the respiratory chain that catalyzes the reduction of oxygen to water. Electrons originating from reduced cytochrome c in the intermembrane space (IMS) are transferred via the dinuclear copper A center (CU(A)) of subunit 2 and heme A of subunit 1 to the active site in subunit 1, a binuclear center (BNC) formed by heme A3 and copper B (CU(B)). The BNC reduces molecular oxygen to 2 water molecules using 4 electrons from cytochrome c in the IMS and 4 protons from the mitochondrial matrix. This chain is Cytochrome c oxidase subunit 7A2, mitochondrial (COX7A2), found in Homo sapiens (Human).